A 594-amino-acid polypeptide reads, in one-letter code: P-granule-associated novel protein 1 (594 aa).

Residues 1–18 (MRSLLSFVLLALARIAIS) form the signal peptide. Residues 19–513 (EETKSCIDIE…PEEEEVYRSG (495 aa)) are Extracellular-facing. 15 LRR repeats span residues 78–101 (GTEL…LFEN), 103–124 (FAKQ…SFQS), 125–149 (LGGS…LFTG), 150–173 (LKSL…AFEE), 175–197 (KKVE…TFDG), 198–221 (MKNL…AFRG), 222–245 (LNSL…IFSA), 246–269 (LKNL…SFPK), 271–290 (EKLV…KLKD), 291–315 (LPSL…MFGL), 318–341 (SDRI…AFQH), 343–365 (PNLI…SPSQ), 374–397 (LKKL…ELPK), 399–419 (LSSL…ALEG), and 420–442 (MEIK…TFDS). A helical transmembrane segment spans residues 514–534 (WITVAATILTIVTIVIMVIIA). At 535–594 (MLYFKDARYQFPLRGRRSDSDLHKLIENDPLNIASDSILVVPAMPKRNTGPKKTVRFQNF) the chain is on the cytoplasmic side.

In terms of assembly, interacts with glh-1. Interacts (via LRR regions) with myrf-1 (via C-terminus); the interaction promotes the role of myrf-1 in the synaptic remodeling of DD GABAergic motor neurons at the cell membrane. Expressed in the germline and somatic cells. In terms of tissue distribution, expressed in the germline and somatic cells. Expressed at higher levels in germline cells relative to somatic cells. As to expression, expressed in germline cells. Highly expressed in the pharynx and at lower levels in the intestine, but not detected in other tissues. Other studies suggest a broader expression pattern in somatic tissues: from embryogenesis to adult stages, expressed strongly in body wall muscle, vulva, somatic gonad and pharynx, at lower levels in the nerve ring, hypodermis, and rectal epithelia, and very weakly in the intestine.

The protein resides in the cytoplasm. It localises to the apical cell membrane. Its function is as follows. Regulates diverse developmental processes including larval molting and gonad maturation. Promotes the localization of myrf-1 and myrf-2 to the cell membrane. In association with myrf-1, promotes the synaptic remodeling of DD GABAergic motor neurons whereby new synapses form in the dorsal processes of DD neurons. The chain is P-granule-associated novel protein 1 from Caenorhabditis elegans.